A 254-amino-acid polypeptide reads, in one-letter code: D-aminoacyl-tRNA deacylase (254 aa).

Residues 61-83 (KPTLTVHTPGNLTEDNSHGGNPE) are disordered. Residues 65-74 (TVHTPGNLTE) are compositionally biased toward polar residues.

Belongs to the DtdA deacylase family. Monomer. It depends on Zn(2+) as a cofactor.

It catalyses the reaction a D-aminoacyl-tRNA + H2O = a tRNA + a D-alpha-amino acid + H(+). The catalysed reaction is glycyl-tRNA(Ala) + H2O = tRNA(Ala) + glycine + H(+). In terms of biological role, D-aminoacyl-tRNA deacylase with broad substrate specificity. By recycling D-aminoacyl-tRNA to D-amino acids and free tRNA molecules, this enzyme counteracts the toxicity associated with the formation of D-aminoacyl-tRNA entities in vivo. This Methanococcus maripaludis (strain C7 / ATCC BAA-1331) protein is D-aminoacyl-tRNA deacylase.